Consider the following 544-residue polypeptide: Chaperonin GroEL 4 (544 aa).

ATP contacts are provided by residues 30–33, Lys-51, 87–91, Gly-415, and Asp-496; these read TLGP and DGTTT.

The protein belongs to the chaperonin (HSP60) family. As to quaternary structure, forms a cylinder of 14 subunits composed of two heptameric rings stacked back-to-back. Interacts with the co-chaperonin GroES.

It localises to the cytoplasm. The catalysed reaction is ATP + H2O + a folded polypeptide = ADP + phosphate + an unfolded polypeptide.. In terms of biological role, together with its co-chaperonin GroES, plays an essential role in assisting protein folding. The GroEL-GroES system forms a nano-cage that allows encapsulation of the non-native substrate proteins and provides a physical environment optimized to promote and accelerate protein folding. This is Chaperonin GroEL 4 from Sinorhizobium medicae (strain WSM419) (Ensifer medicae).